We begin with the raw amino-acid sequence, 388 residues long: MEKQAEKQLEKQLESFILHLKRKTVVGSYQVSRASAELLRQWVHKGKWGNAKSLIDQIKIIGKKLMNAQPLEFCIGNIVRRVLFIIREEYLTFFRNKKNGLNNDDYDDDDFETTTSNNNNNNNNNNINSSSNINKNNKYSNVMLQDDPIDDQEDIDFTETFPRLKAAIMDSINELIDELEGLHRNVAEQAIEHIHSNETIMTLGCSRTVEEFLKEAARKRSFKVIVVETAPSLEGQKTAISLSKASIDTTLITDSAVFAMMSRVNKVIIGTHAVMANGGLIATSGTHTLAVAAKYHSVPIVVCTGLYKLCPLYAYDQDTFNNFGSPGEYLKFEEAEFLENVHSYNPTFDYVAPDLVSLFITNIGGHNPSYIYRLLQEYYDARDILEDE.

A disordered region spans residues 109 to 133 (DDFETTTSNNNNNNNNNNINSSSNI). Residues 116-133 (SNNNNNNNNNNINSSSNI) show a composition bias toward low complexity.

It belongs to the eIF-2B alpha/beta/delta subunits family. In terms of assembly, component of the translation initiation factor 2B (eIF2B) complex which is a heterodecamer of two sets of five different subunits: alpha, beta, gamma, delta and epsilon. Subunits alpha, beta and delta comprise a regulatory subcomplex and subunits epsilon and gamma comprise a catalytic subcomplex. Within the complex, the hexameric regulatory complex resides at the center, with the two heterodimeric catalytic subcomplexes bound on opposite sides.

The protein resides in the cytoplasm. It localises to the cytosol. Acts as a component of the translation initiation factor 2B (eIF2B) complex, which catalyzes the exchange of GDP for GTP on eukaryotic initiation factor 2 (eIF2) gamma subunit. Its guanine nucleotide exchange factor activity is repressed when bound to eIF2 complex phosphorylated on the alpha subunit, thereby limiting the amount of methionyl-initiator methionine tRNA available to the ribosome and consequently global translation is repressed. This is Translation initiation factor eIF2B subunit beta (eif2b2) from Dictyostelium discoideum (Social amoeba).